A 153-amino-acid polypeptide reads, in one-letter code: Aspartate carbamoyltransferase regulatory chain (153 aa).

Zn(2+)-binding residues include C109, C114, C138, and C141.

It belongs to the PyrI family. Contains catalytic and regulatory chains. The cofactor is Zn(2+).

In terms of biological role, involved in allosteric regulation of aspartate carbamoyltransferase. The chain is Aspartate carbamoyltransferase regulatory chain from Escherichia coli O7:K1 (strain IAI39 / ExPEC).